Consider the following 958-residue polypeptide: MEGALTARDKVGVQDFVLLDAYTSESAFLENLRKRFRENLIYTYIGTLLVSVNPYQELGIYTASQMELYQGVNFFELPPHVYAIADNAYRMMCSELNNHFILISGESGAGKTEASKKILQYFAVTCPMTESLQIARDRLLLSIPVLEAFGNAKTLRNDNSSRFGKYMDIQFDFQGVPVGGHIISYLIEKSRVVYQNHGERNFHIFYQLLAGGGSERLASLGLERDPQLYKYLSQGHCARESPISDKNDWETVCGAFSVIGFTEADLENLFGIIASVLHLGNVCFKGDKQGCASVPDTHEIKWIAKLLGVCPAVLLEALTHRKIEAKTEEVICPLTVELSVYARDAMAKAVYGRTFTWLVNRINSSLVNKDFTQKTVIGLLDIYGFEVFDKNGFEQFCINYCNEKLQQLLIERTLKAEQAEYESEGIEWETVQYFNNKIICDLVEERHRGIISILDEECIRPGPATDLSFLEKLEEKVGKHAHFQTRKLAGPKGRKRIGWLEFCLLHYAGEVTYCTKGFLEKNNDLLYRHLKEVLCSSKNSILRECFLVAELENRRRPPTVGTQFKNSLSSLLEILISKEPSYIRCIKPNERKEPSKFDDFLISHQIKYLGLMEHLRVRRAGFAYRRKYEHFLQRYKSLCPDTWPHWHGPPGEGVERLIKYIGYQPQDYKLGKTKIFIRFPRTLFATEDAFEFSKHQLVSRIQATYKGCLGRREYMKKRQAATKLEAHWRGVLARKEIKRRRWAVQIIRRFVKGFINRDKPLCPDNEEFVVLVRKNYILNLRYHVPKNVLDKSWLRPPGILENASNLLRRMCTRNLVRKYCRGISAERKAMMQQKVVTSEIFRGKKEGYAESLNQLFAGSRLGVSTSSLSDGILVIHISPADKQQKGDVILQCEHIFEVATKLAMLIRKEHTVRVVQGSLQFYVSPGREGTIVFETGEEDQVYKDKNGQLRVVSAGKKT.

The 680-residue stretch at 12–691 (GVQDFVLLDA…TLFATEDAFE (680 aa)) folds into the Myosin motor domain. ATP is bound at residue 105 to 112 (GESGAGKT). Serine 365 is modified (phosphoserine). Residues 568-590 (LSSLLEILISKEPSYIRCIKPNE) form an actin-binding region. IQ domains lie at 694 to 716 (KHQL…EYMK) and 717 to 746 (KRQA…AVQI). Positions 773-955 (RKNYILNLRY…NGQLRVVSAG (183 aa)) constitute a TH1 domain.

This sequence belongs to the TRAFAC class myosin-kinesin ATPase superfamily. Myosin family. As to expression, highly expressed in the central nervous system, including the forebrain, midbrain and lower medulla. In the lower medulla, it is broadly expressed throughout the reticular formation. It is expressed in the retrotrapezoid nucleus and the nucleus of the solitary tract, as well as motor neurons of the facial, vagal and ambiguus nuclei. Expressed in neonatal inner-ear organs.

Myosins are actin-based motor molecules with ATPase activity. Unconventional myosins serve in intracellular movements. Their highly divergent tails are presumed to bind to membranous compartments, which would be moved relative to actin filaments. The sequence is that of Unconventional myosin-Ih (Myo1h) from Mus musculus (Mouse).